The sequence spans 183 residues: MSSLDNLVAEILQQAEKEANRILVKVKAENLEFTENENKKIQKEIENIQWKTNEEAISLKERIISNANLKSRDMVLQAKEELVDKVLKMTLERLKNLDSDSYLDFVENALKTLNISKNAEIILTKKMKDVLGKEIFGYKVSDDIVESGCNIKDGNVIYNNEFSSLLEFNKEDLEREILKKIFG.

Belongs to the V-ATPase E subunit family.

Its function is as follows. Produces ATP from ADP in the presence of a proton gradient across the membrane. In Fusobacterium nucleatum subsp. nucleatum (strain ATCC 25586 / DSM 15643 / BCRC 10681 / CIP 101130 / JCM 8532 / KCTC 2640 / LMG 13131 / VPI 4355), this protein is V-type ATP synthase subunit E.